The primary structure comprises 260 residues: Histidine-binding periplasmic protein (260 aa).

Residues methionine 1–alanine 22 form the signal peptide. An intrachain disulfide couples cysteine 60 to cysteine 67. L-histidine is bound by residues serine 91, serine 92, serine 94, arginine 99, threonine 143, and aspartate 183.

The protein belongs to the bacterial solute-binding protein 3 family. The complex is composed of two ATP-binding proteins (HisP), two transmembrane proteins (HisM and HisQ) and a solute-binding protein (HisJ).

Its subcellular location is the periplasm. Part of the ABC transporter complex HisPMQJ involved in histidine transport. Binds histidine. Interacts with HisQMP and stimulates ATPase activity of HisP, which results in histidine translocation. May have some additional function(s) in translocation that is independent of the stimulation of ATP hydrolysis. The sequence is that of Histidine-binding periplasmic protein from Salmonella typhimurium (strain LT2 / SGSC1412 / ATCC 700720).